Here is a 96-residue protein sequence, read N- to C-terminus: (4S)-4-hydroxy-5-phosphonooxypentane-2,3-dione isomerase (96 aa).

The ABM domain occupies 2-91 (HVTLVEINVH…MTGPRTKKVF (90 aa)).

The protein belongs to the LsrG family. As to quaternary structure, homodimer.

It is found in the cytoplasm. The catalysed reaction is (2S)-2-hydroxy-3,4-dioxopentyl phosphate = 3-hydroxy-2,4-dioxopentyl phosphate. Its function is as follows. Involved in the degradation of phospho-AI-2, thereby terminating induction of the lsr operon and closing the AI-2 signaling cycle. Catalyzes the conversion of (4S)-4-hydroxy-5-phosphonooxypentane-2,3-dione (P-DPD) to 3-hydroxy-5-phosphonooxypentane-2,4-dione (P-HPD). The sequence is that of (4S)-4-hydroxy-5-phosphonooxypentane-2,3-dione isomerase from Salmonella choleraesuis (strain SC-B67).